We begin with the raw amino-acid sequence, 876 residues long: Alanine--tRNA ligase (876 aa).

N6-acetyllysine is present on Lys74. Residues His564, His568, Cys666, and His670 each coordinate Zn(2+).

This sequence belongs to the class-II aminoacyl-tRNA synthetase family. Homotetramer. Zn(2+) serves as cofactor.

It localises to the cytoplasm. The catalysed reaction is tRNA(Ala) + L-alanine + ATP = L-alanyl-tRNA(Ala) + AMP + diphosphate. In terms of biological role, catalyzes the attachment of alanine to tRNA(Ala) in a two-step reaction: alanine is first activated by ATP to form Ala-AMP and then transferred to the acceptor end of tRNA(Ala). Also edits incorrectly charged Ser-tRNA(Ala) and Gly-tRNA(Ala) via its editing domain. The sequence is that of Alanine--tRNA ligase from Shigella boydii serotype 4 (strain Sb227).